Reading from the N-terminus, the 208-residue chain is Small ribosomal subunit protein uS4 (208 aa).

The S4 RNA-binding domain maps to 98–159 (RRLDNVVYRL…KSRKIVSIND (62 aa)).

This sequence belongs to the universal ribosomal protein uS4 family. Part of the 30S ribosomal subunit. Contacts protein S5. The interaction surface between S4 and S5 is involved in control of translational fidelity.

One of the primary rRNA binding proteins, it binds directly to 16S rRNA where it nucleates assembly of the body of the 30S subunit. Functionally, with S5 and S12 plays an important role in translational accuracy. The chain is Small ribosomal subunit protein uS4 from Pelobacter propionicus (strain DSM 2379 / NBRC 103807 / OttBd1).